We begin with the raw amino-acid sequence, 631 residues long: ATP-dependent zinc metalloprotease FtsH (631 aa).

Residues 1–5 are Cytoplasmic-facing; sequence MKKSN. The helical transmembrane segment at 6 to 26 threads the bilayer; the sequence is PWFVFFWITLLVIVLMFINFA. Residues 27 to 102 are Periplasmic-facing; it reads RQGGNEVELE…LEFSATEKSG (76 aa). A helical transmembrane segment spans residues 103–123; sequence WLGSLLLNWGPVVLLILFCFW. Residues 124 to 631 are Cytoplasmic-facing; the sequence is MMRGMSMGNK…KVINEKVIIS (508 aa). 196–203 contributes to the ATP binding site; sequence GSPGTGKT. H418 is a Zn(2+) binding site. The active site involves E419. Residues H422 and D494 each contribute to the Zn(2+) site.

This sequence in the central section; belongs to the AAA ATPase family. In the C-terminal section; belongs to the peptidase M41 family. Homohexamer. Requires Zn(2+) as cofactor.

Its subcellular location is the cell inner membrane. Acts as a processive, ATP-dependent zinc metallopeptidase for both cytoplasmic and membrane proteins. Plays a role in the quality control of integral membrane proteins. This Endomicrobium trichonymphae protein is ATP-dependent zinc metalloprotease FtsH.